The following is a 386-amino-acid chain: Nucleosome assembly protein 1-like 4 (386 aa).

A disordered region spans residues 1 to 28 (MAENSLSDGGPADSVEAAKNASNTEKLT). A2 bears the N-acetylalanine mark. S5, S7, and S49 each carry phosphoserine. T51 is modified (phosphothreonine). Residues S53 and S54 each carry the phosphoserine modification. A Phosphothreonine modification is found at T58. K105 is modified (N6-acetyllysine). S125 carries the phosphoserine modification. An N6-acetyllysine modification is found at K146. Positions 265 to 271 (IKKKQKH) match the Nuclear localization signal motif. A Phosphoserine modification is found at S304. Residues 339 to 370 (AIEDDDNFEEGEEGEEEELEGDEEGEDEDDAD) are compositionally biased toward acidic residues. Positions 339–386 (AIEDDDNFEEGEEGEEEELEGDEEGEDEDDADVNPKKEPIQPAECKQQ) are disordered.

Belongs to the nucleosome assembly protein (NAP) family. In terms of assembly, interacts with core (H2A, H2B, H3, H4) and linker (H1) histones. Post-translationally, polyglutamylated and polyglycylated. These 2 modifications occur exclusively on glutamate residues and result in either polyglutamate or polyglycine chains on the gamma-carboxyl group. Both modifications can coexist on the same protein on adjacent residues, and lowering polyglycylation levels increases polyglutamylation, and reciprocally. Polyglutamylated by TTLL4. Phosphorylated at the G0/G1 boundary but it is not phosphorylated in S-phase. Phosphorylated protein remains in the cytoplasm in a complex with histones during the G0/G1 transition, whereas dephosphorylation triggers its transport into the nucleus at the G1/S-boundary.

The protein localises to the nucleus. It localises to the cytoplasm. Its function is as follows. Acts as a histone chaperone in nucleosome assembly. The polypeptide is Nucleosome assembly protein 1-like 4 (Nap1l4) (Rattus norvegicus (Rat)).